Consider the following 337-residue polypeptide: MISLKSIVDKLYNLEDLSYQESYQLFDYFIKGQIELPLQTSILTALKLKKETSIEIAAAVEALFDNTKEFPKIKGDLAGIVGTGGDGFNTINISTTAAIVAATAGYKVAKHGGRSVSSKSGSFDLLESFGVNIELAPDQTKQCLELYNLGFLFVPFYSDGFRHIKEARTILKTRTIFNILGPLINPARPNKVVIGVYSKDLILPMAKTLVNLGIDRAVVVYGSGLDEVAIHDDTYVAEIQNNQIIEYKVSPVDFGIDTYAIKDLEGGLPEQNREIIKQILLGKGKEAHNAAVAVNVAMLMKLYDKDDLKQNTQEVLEIIKSGKCFNILQQVINYSNK.

Residues G82, 85–86, T90, 92–95, 110–118, and S122 each bind 5-phospho-alpha-D-ribose 1-diphosphate; these read GD, NIST, and KHGGRSVSS. G82 is a binding site for anthranilate. S94 lines the Mg(2+) pocket. Position 168 (R168) interacts with anthranilate. Mg(2+) is bound by residues D226 and E227.

This sequence belongs to the anthranilate phosphoribosyltransferase family. Homodimer. Mg(2+) serves as cofactor.

It catalyses the reaction N-(5-phospho-beta-D-ribosyl)anthranilate + diphosphate = 5-phospho-alpha-D-ribose 1-diphosphate + anthranilate. The protein operates within amino-acid biosynthesis; L-tryptophan biosynthesis; L-tryptophan from chorismate: step 2/5. Its function is as follows. Catalyzes the transfer of the phosphoribosyl group of 5-phosphorylribose-1-pyrophosphate (PRPP) to anthranilate to yield N-(5'-phosphoribosyl)-anthranilate (PRA). The chain is Anthranilate phosphoribosyltransferase from Francisella tularensis subsp. tularensis (strain WY96-3418).